Here is a 274-residue protein sequence, read N- to C-terminus: N-acetylmuramic acid 6-phosphate etherase (274 aa).

In terms of domain architecture, SIS spans 52 to 215 (IVPRMEQGGR…STSIMIRLGR (164 aa)). E80 (proton donor) is an active-site residue. Residue E111 is part of the active site.

The protein belongs to the GCKR-like family. MurNAc-6-P etherase subfamily. In terms of assembly, homodimer.

The catalysed reaction is N-acetyl-D-muramate 6-phosphate + H2O = N-acetyl-D-glucosamine 6-phosphate + (R)-lactate. It participates in amino-sugar metabolism; N-acetylmuramate degradation. In terms of biological role, specifically catalyzes the cleavage of the D-lactyl ether substituent of MurNAc 6-phosphate, producing GlcNAc 6-phosphate and D-lactate. The protein is N-acetylmuramic acid 6-phosphate etherase of Porphyromonas gingivalis (strain ATCC 33277 / DSM 20709 / CIP 103683 / JCM 12257 / NCTC 11834 / 2561).